The primary structure comprises 739 residues: NAD(P)H-quinone oxidoreductase subunit 5, chloroplastic (739 aa).

16 helical membrane-spanning segments follow: residues 9–29 (WVIP…LILI), 39–59 (IWAF…VQLS), 89–109 (IDPL…LVLI), 125–145 (FVYI…SNLI), 147–167 (IYFF…FWFT), 185–205 (GDFG…SLEF), 219–239 (NGVN…GAVA), 258–278 (TPIS…FLLA), 280–300 (LLPL…VGTI), 327–347 (LGYM…FHLI), 354–374 (ALLF…VGYS), 396–416 (TTFL…CFWS), 425–445 (WLYS…TAFY), 542–562 (LFPL…GISF), 610–630 (TLAI…YSFF), and 719–739 (ISSY…FFLS).

It belongs to the complex I subunit 5 family. As to quaternary structure, NDH is composed of at least 16 different subunits, 5 of which are encoded in the nucleus.

The protein resides in the plastid. Its subcellular location is the chloroplast thylakoid membrane. It carries out the reaction a plastoquinone + NADH + (n+1) H(+)(in) = a plastoquinol + NAD(+) + n H(+)(out). It catalyses the reaction a plastoquinone + NADPH + (n+1) H(+)(in) = a plastoquinol + NADP(+) + n H(+)(out). In terms of biological role, NDH shuttles electrons from NAD(P)H:plastoquinone, via FMN and iron-sulfur (Fe-S) centers, to quinones in the photosynthetic chain and possibly in a chloroplast respiratory chain. The immediate electron acceptor for the enzyme in this species is believed to be plastoquinone. Couples the redox reaction to proton translocation, and thus conserves the redox energy in a proton gradient. The polypeptide is NAD(P)H-quinone oxidoreductase subunit 5, chloroplastic (ndhF) (Triticum aestivum (Wheat)).